The following is a 201-amino-acid chain: MDKRTCNSQDVEVRKGPWTMEEDLILINYIANHGEGVWNSLARSAGLKRTGKSCRLRWLNYLRPDVRRGNITPEEQLLIMELHAKWGNRWSKIAKHLPGRTDNEIKNYWRTRIQKHIKQADQNMKKPSKCEQNDQKAISTSQASTGPTDTIDSYSPSSYTENTNNNMENITFQGNFPTETNENIWSMEDLWSLQLLNDATN.

2 HTH myb-type domains span residues Asp10 to Leu62 and Arg63 to Ile117. 2 DNA-binding regions (H-T-H motif) span residues Trp38 to Leu62 and Trp90 to Ile113. Positions Asp121–Ile170 are disordered. Residues Gln135–Tyr159 show a composition bias toward polar residues. Low complexity predominate over residues Thr160–Asn169.

As to expression, expressed exclusively in flower organs. Accumulates mostly in flower limbs, to a lower extent in pistils and flower tubes, and, at low levels, in stamens.

The protein localises to the nucleus. Functionally, MYB-type transcription factor controlling the production of volatile organic compounds (VOCs), including floral volatile benzenoids and phenylpropanoids (FVBP), in flowers of fragrant cultivars (e.g. cv. Mitchell and cv. V26) by regulating the expression of ODO1, a key regulator of the shikimate pathway, and of several biosynthetic floral scent-related genes (e.g. IGS, EGS, BSMT1, BSMT2, PAL1, PAL2, EPSPS, DAHPS, CS, CM1, ADT1 and PPA-AT). Binds to and activates the promoters of at least ODO1, IGS1 and PAL1. The polypeptide is MYB-like transcription factor EOBI (Petunia hybrida (Petunia)).